Here is a 437-residue protein sequence, read N- to C-terminus: MANVVVIGAQWGDEGKGKITDLLSRSADVVVRYQGGVNAGHTIVVDDRVLKLHLIPSGILYPETICLIGSGTVVDPKVMLGELDMLIANDIDISGLQLASTAHVTMPYHRLLDLAMEKQRGDRRIGTTGRGIGPTYADKSQRSGIRVIDLLDEARLRERLEGPLQEKNQLLETIYGVEPLDAETVIKEYLGYGKRLAPHVVECTQAIHQAARARKNILFEGAQGTLLDLDHGTYPYVTSSNPVSGGACIGAGVGPTLIDRVIGVAKAYTTRVGEGPFPTELSGRLNDQLTERGGEFGTTTGRRRRCGWFDGVIGRYAVQVNGLDCLAVTKLDVLDELDAIQVCVAYELDGERIEHFPSSAEDFARCNPLFETLPGWQCSTEDCRKLEDLPDAAMAYLRFLADLMEVPIAIVSLGASRDQTIVVEDPIHGPKRALLSA.

Residues 12–18 (GDEGKGK) and 40–42 (GHT) each bind GTP. The active-site Proton acceptor is the Asp13. Positions 13 and 40 each coordinate Mg(2+). Residues 13-16 (DEGK), 38-41 (NAGH), Thr128, Arg142, Gln223, Thr238, and Arg302 contribute to the IMP site. The active-site Proton donor is His41. 298 to 304 (TTTGRRR) serves as a coordination point for substrate. Residues Arg304, 330 to 332 (KLD), and 412 to 414 (SLG) contribute to the GTP site.

This sequence belongs to the adenylosuccinate synthetase family. Homodimer. Requires Mg(2+) as cofactor.

It localises to the cytoplasm. The enzyme catalyses IMP + L-aspartate + GTP = N(6)-(1,2-dicarboxyethyl)-AMP + GDP + phosphate + 2 H(+). It participates in purine metabolism; AMP biosynthesis via de novo pathway; AMP from IMP: step 1/2. Its function is as follows. Plays an important role in the de novo pathway of purine nucleotide biosynthesis. Catalyzes the first committed step in the biosynthesis of AMP from IMP. The polypeptide is Adenylosuccinate synthetase (Parasynechococcus marenigrum (strain WH8102)).